Consider the following 295-residue polypeptide: Xyloglucan endotransglucosylase protein 2 (295 aa).

A signal peptide spans methionine 1–glycine 23. Residues alanine 24–tyrosine 222 form the GH16 domain. The active-site Nucleophile is the glutamate 108. Glutamate 112 acts as the Proton donor in catalysis. Position 112 (glutamate 112) interacts with xyloglucan. The N-linked (GlcNAc...) asparagine glycan is linked to asparagine 116. Residues glutamine 125 to asparagine 127, aspartate 135 to glutamate 137, aspartate 201 to tryptophan 202, and glycine 206 contribute to the xyloglucan site. 2 cysteine pairs are disulfide-bonded: cysteine 230/cysteine 239 and cysteine 276/cysteine 289. Arginine 281 serves as a coordination point for xyloglucan.

This sequence belongs to the glycosyl hydrolase 16 family. XTH group 1 subfamily. Post-translationally, contains at least one intrachain disulfide bond essential for its enzymatic activity. Expressed in fruit pulp.

The protein localises to the secreted. It localises to the cell wall. Its subcellular location is the extracellular space. The protein resides in the apoplast. The catalysed reaction is breaks a beta-(1-&gt;4) bond in the backbone of a xyloglucan and transfers the xyloglucanyl segment on to O-4 of the non-reducing terminal glucose residue of an acceptor, which can be a xyloglucan or an oligosaccharide of xyloglucan.. Catalyzes xyloglucan endotransglycosylation (XET). Cleaves and religates xyloglucan polymers. Does not catalyze xyloglucan endohydrolysis (XEH). Probably involved in cell wall restructuring during fruit ripening and postharvest fruit softening. The polypeptide is Xyloglucan endotransglucosylase protein 2 (Diospyros kaki (Kaki persimmon)).